The following is a 760-amino-acid chain: Semaphorin-4A (760 aa).

The N-terminal stretch at 1-32 is a signal peptide; the sequence is MALPSLGQDSWSLLRVFFFQLFLLPSLPPASG. At 33-682 the chain is on the extracellular side; that stretch reads TGGQGPMPRV…MAAQRSYWPH (650 aa). One can recognise a Sema domain in the interval 36–494; it reads QGPMPRVKYH…FSGGIWRVPR (459 aa). Cysteine 113 and cysteine 124 are oxidised to a cystine. 2 N-linked (GlcNAc...) asparagine glycosylation sites follow: asparagine 120 and asparagine 135. 3 cysteine pairs are disulfide-bonded: cysteine 142–cysteine 151, cysteine 269–cysteine 379, and cysteine 293–cysteine 339. Asparagine 496 carries an N-linked (GlcNAc...) asparagine glycan. Positions 496–547 constitute a PSI domain; that stretch reads NCSVYESCVDCVLARDPHCAWDPESRLCSLLSGSTKPWKQDMERGNPEWVCT. 3 disulfide bridges follow: cysteine 497/cysteine 514, cysteine 506/cysteine 523, and cysteine 579/cysteine 623. Residues 572-630 enclose the Ig-like C2-type domain; sequence NSILELPCPHLSALASYHWSHGRAKISEASATVYNGSLLLLPQDGVGGLYQCVATENGY. N-linked (GlcNAc...) asparagine glycosylation is present at asparagine 606. Residues 683 to 703 traverse the membrane as a helical segment; that stretch reads FLIVTVLLAIVLLGVLTLLLA. Residues 704–760 lie on the Cytoplasmic side of the membrane; the sequence is SPLGALRARGKVQGCGMLPPREKAPLSRDQHLQPSKDHRTSASDVDADNNHLGAEVA. Residues 720 to 760 are disordered; it reads MLPPREKAPLSRDQHLQPSKDHRTSASDVDADNNHLGAEVA. Residues 723-744 are compositionally biased toward basic and acidic residues; sequence PREKAPLSRDQHLQPSKDHRTS.

This sequence belongs to the semaphorin family. In terms of assembly, interacts with PLXNB1, PLXNB2 and PLXNB3. Interacts with PLXND1. Interacts with TIMD2. Expressed in neurons and glia in the developing hippocampus.

Its subcellular location is the cell membrane. In terms of biological role, cell surface receptor for PLXNB1, PLXNB2, PLXNB3 and PLXND1 that plays an important role in cell-cell signaling. Regulates glutamatergic and GABAergic synapse development. Promotes the development of inhibitory synapses in a PLXNB1-dependent manner and promotes the development of excitatory synapses in a PLXNB2-dependent manner. Plays a role in priming antigen-specific T-cells, promotes differentiation of Th1 T-helper cells, and thereby contributes to adaptive immunity. Promotes phosphorylation of TIMD2. Inhibits angiogenesis. Promotes axon growth cone collapse. Inhibits axonal extension by providing local signals to specify territories inaccessible for growing axons. The sequence is that of Semaphorin-4A (Sema4a) from Mus musculus (Mouse).